Here is a 319-residue protein sequence, read N- to C-terminus: Acyl-coenzyme A thioesterase 8 (319 aa).

The segment at 1–20 (MSSPQAPEDGQGCGDRGDPP) is disordered. Active-site charge relay system residues include D232, S254, and Q304. Residues 317-319 (SKL) carry the Microbody targeting signal motif.

It belongs to the C/M/P thioester hydrolase family. In terms of assembly, homodimer. As to quaternary structure, (Microbial infection) Interacts with human immunodeficiency virus (HIV-1) Nef (via middle region); this interaction enhances ACOT8 Acyl-CoA thioesterase activity and occurs in a Nef myristoylation-independent manner. According to a second report, the interaction with HIV-1 Nef occurs in a Nef myristoylation-independent manner but does not enhance ACOT8 Acyl-CoA thioesterase activity. Detected in a T-cell line (at protein level). Ubiquitous.

It localises to the peroxisome matrix. It carries out the reaction choloyl-CoA + H2O = cholate + CoA + H(+). The catalysed reaction is chenodeoxycholoyl-CoA + H2O = chenodeoxycholate + CoA + H(+). The enzyme catalyses acetyl-CoA + H2O = acetate + CoA + H(+). It catalyses the reaction butanoyl-CoA + H2O = butanoate + CoA + H(+). It carries out the reaction 2-methylpropanoyl-CoA + H2O = 2-methylpropanoate + CoA + H(+). The catalysed reaction is hexanoyl-CoA + H2O = hexanoate + CoA + H(+). The enzyme catalyses octanoyl-CoA + H2O = octanoate + CoA + H(+). It catalyses the reaction decanoyl-CoA + H2O = decanoate + CoA + H(+). It carries out the reaction dodecanoyl-CoA + H2O = dodecanoate + CoA + H(+). The catalysed reaction is tetradecanoyl-CoA + H2O = tetradecanoate + CoA + H(+). The enzyme catalyses hexadecanoyl-CoA + H2O = hexadecanoate + CoA + H(+). It catalyses the reaction octadecanoyl-CoA + H2O = octadecanoate + CoA + H(+). It carries out the reaction malonyl-CoA + H2O = malonate + CoA + H(+). The catalysed reaction is acetoacetyl-CoA + H2O = acetoacetate + CoA + H(+). The enzyme catalyses propanoyl-CoA + H2O = propanoate + CoA + H(+). It catalyses the reaction succinyl-CoA + H2O = succinate + CoA + H(+). It carries out the reaction glutaryl-CoA + H2O = glutarate + CoA + H(+). The catalysed reaction is hexanedioyl-CoA + H2O = hexanedioate + CoA + H(+). The enzyme catalyses octanedioyl-CoA + H2O = octanedioate + CoA + H(+). It catalyses the reaction decanedioyl-CoA + H2O = decanedioate + CoA + H(+). It carries out the reaction dodecanedioyl-CoA + H2O = dodecanedioate + CoA + H(+). The catalysed reaction is (9Z)-tetradecenoyl-CoA + H2O = (9Z)-tetradecenoate + CoA + H(+). The enzyme catalyses (9Z)-hexadecenoyl-CoA + H2O = (9Z)-hexadecenoate + CoA + H(+). It catalyses the reaction (9Z)-octadecenoyl-CoA + H2O = (9Z)-octadecenoate + CoA + H(+). It carries out the reaction (9Z,12Z)-octadecadienoyl-CoA + H2O = (9Z,12Z)-octadecadienoate + CoA + H(+). The catalysed reaction is eicosanoyl-CoA + H2O = eicosanoate + CoA + H(+). The enzyme catalyses (5Z,8Z,11Z,14Z)-eicosatetraenoyl-CoA + H2O = (5Z,8Z,11Z,14Z)-eicosatetraenoate + CoA + H(+). It catalyses the reaction 4,8-dimethylnonanoyl-CoA + H2O = 4,8-dimethylnonanoate + CoA + H(+). It carries out the reaction 2,6-dimethylheptanoyl-CoA + H2O = 2,6-dimethylheptanoate + CoA + H(+). The catalysed reaction is (3S)-3-hydroxy-3-methylglutaryl-CoA + H2O = 3-hydroxy-3-methylglutarate + CoA + H(+). The enzyme catalyses 3alpha,7alpha,12alpha-trihydroxy-5beta-cholestan-26-oyl-CoA + H2O = 3alpha,7alpha,12alpha-trihydroxy-5beta-cholestan-26-oate + CoA + H(+). It catalyses the reaction 2-methyloctadecanoyl-CoA + H2O = 2-methyloctadecanoate + CoA + H(+). It carries out the reaction prostaglandin F2alpha-CoA + H2O = prostaglandin F2alpha + CoA + H(+). Its pathway is lipid metabolism; fatty acid metabolism. With respect to regulation, inhibited by CoASH (IC(50)=10-15 uM). Also inhibited by cysteine-reactive agents. Its function is as follows. Catalyzes the hydrolysis of acyl-CoAs into free fatty acids and coenzyme A (CoASH), regulating their respective intracellular levels. Displays no strong substrate specificity with respect to the carboxylic acid moiety of Acyl-CoAs. Hydrolyzes medium length (C2 to C20) straight-chain, saturated and unsaturated acyl-CoAS but is inactive towards substrates with longer aliphatic chains. Moreover, it catalyzes the hydrolysis of CoA esters of bile acids, such as choloyl-CoA and chenodeoxycholoyl-CoA and competes with bile acid CoA:amino acid N-acyltransferase (BAAT). Is also able to hydrolyze CoA esters of dicarboxylic acids. It is involved in the metabolic regulation of peroxisome proliferation. Functionally, (Microbial infection) May mediate Nef-induced down-regulation of CD4 cell-surface expression. In Homo sapiens (Human), this protein is Acyl-coenzyme A thioesterase 8 (ACOT8).